Consider the following 310-residue polypeptide: tRNA uridine(34) hydroxylase (310 aa).

The Rhodanese domain occupies 123–217; it reads ADPDVVVIDV…YLEKVPEDES (95 aa). Residue Cys177 is the Cysteine persulfide intermediate of the active site.

This sequence belongs to the TrhO family.

The enzyme catalyses uridine(34) in tRNA + AH2 + O2 = 5-hydroxyuridine(34) in tRNA + A + H2O. In terms of biological role, catalyzes oxygen-dependent 5-hydroxyuridine (ho5U) modification at position 34 in tRNAs. In Acaryochloris marina (strain MBIC 11017), this protein is tRNA uridine(34) hydroxylase.